We begin with the raw amino-acid sequence, 494 residues long: uncharacterized protein (494 aa).

A 2Fe-2S ferredoxin-type domain is found at Phe4 to Phe82. [2Fe-2S] cluster-binding residues include Cys46, Cys51, Cys54, and Cys66. 2 4Fe-4S ferredoxin-type domains span residues Asp127–Gly157 and Glu178–Asn208. [4Fe-4S] cluster contacts are provided by Cys137, Cys140, Cys143, Cys147, Cys189, Cys192, Cys195, and Cys199.

It belongs to the succinate dehydrogenase/fumarate reductase iron-sulfur protein family.

This is an uncharacterized protein from Methanococcus maripaludis (strain DSM 14266 / JCM 13030 / NBRC 101832 / S2 / LL).